Reading from the N-terminus, the 242-residue chain is Phosphoribosylaminoimidazole-succinocarboxamide synthase (242 aa).

Belongs to the SAICAR synthetase family.

The catalysed reaction is 5-amino-1-(5-phospho-D-ribosyl)imidazole-4-carboxylate + L-aspartate + ATP = (2S)-2-[5-amino-1-(5-phospho-beta-D-ribosyl)imidazole-4-carboxamido]succinate + ADP + phosphate + 2 H(+). It participates in purine metabolism; IMP biosynthesis via de novo pathway; 5-amino-1-(5-phospho-D-ribosyl)imidazole-4-carboxamide from 5-amino-1-(5-phospho-D-ribosyl)imidazole-4-carboxylate: step 1/2. The chain is Phosphoribosylaminoimidazole-succinocarboxamide synthase from Ehrlichia chaffeensis (strain ATCC CRL-10679 / Arkansas).